Reading from the N-terminus, the 515-residue chain is Maturase K (515 aa).

This sequence belongs to the intron maturase 2 family. MatK subfamily.

The protein localises to the plastid. It localises to the chloroplast. Usually encoded in the trnK tRNA gene intron. Probably assists in splicing its own and other chloroplast group II introns. The protein is Maturase K of Pinus elliottii (Slash pine).